Here is a 356-residue protein sequence, read N- to C-terminus: Peptide-N(4)-(N-acetyl-beta-glucosaminyl)asparagine amidase (356 aa).

Residues C129, C132, C163, and C166 each coordinate Zn(2+). C189 functions as the Nucleophile in the catalytic mechanism. Residues H216 and D233 contribute to the active site. E236 provides a ligand contact to substrate. The interval 300–356 (IRQNLSPSEKEELKREDEAEERELASYNADEPQEAQMPRQSGSVEWTKARGEGGSDD) is disordered. 2 stretches are compositionally biased toward basic and acidic residues: residues 307 to 316 (SEKEELKRED) and 346 to 356 (TKARGEGGSDD).

Belongs to the transglutaminase-like superfamily. PNGase family. The cofactor is Zn(2+).

It localises to the cytoplasm. It carries out the reaction Hydrolysis of an N(4)-(acetyl-beta-D-glucosaminyl)asparagine residue in which the glucosamine residue may be further glycosylated, to yield a (substituted) N-acetyl-beta-D-glucosaminylamine and a peptide containing an aspartate residue.. In terms of biological role, specifically deglycosylates the denatured form of N-linked glycoproteins in the cytoplasm and assists their proteasome-mediated degradation. Cleaves the beta-aspartyl-glucosamine (GlcNAc) of the glycan and the amide side chain of Asn, converting Asn to Asp. Prefers proteins containing high-mannose over those bearing complex type oligosaccharides. Can recognize misfolded proteins in the endoplasmic reticulum that are exported to the cytosol to be destroyed and deglycosylate them, while it has no activity toward native proteins. Deglycosylation is a prerequisite for subsequent proteasome-mediated degradation of some, but not all, misfolded glycoproteins. The protein is Peptide-N(4)-(N-acetyl-beta-glucosaminyl)asparagine amidase (PNG1) of Yarrowia lipolytica (strain CLIB 122 / E 150) (Yeast).